The chain runs to 263 residues: Glutamate racemase (263 aa).

Substrate-binding positions include 12 to 13 (DS) and 44 to 45 (YG). Cys-75 functions as the Proton donor/acceptor in the catalytic mechanism. 76-77 (NT) serves as a coordination point for substrate. Cys-186 (proton donor/acceptor) is an active-site residue. Residue 187 to 188 (TH) coordinates substrate.

It belongs to the aspartate/glutamate racemases family.

It catalyses the reaction L-glutamate = D-glutamate. Its pathway is cell wall biogenesis; peptidoglycan biosynthesis. Its function is as follows. Provides the (R)-glutamate required for cell wall biosynthesis. The sequence is that of Glutamate racemase from Ectopseudomonas mendocina (strain ymp) (Pseudomonas mendocina).